The chain runs to 315 residues: Mycothiol acetyltransferase (315 aa).

N-acetyltransferase domains are found at residues 4 to 141 (LDWR…RPLR) and 152 to 315 (VVIR…GTDN). E36 contacts 1D-myo-inositol 2-(L-cysteinylamino)-2-deoxy-alpha-D-glucopyranoside. Residues 80–82 (LVV) and 88–93 (RRGIGT) contribute to the acetyl-CoA site. Residues E179, K224, and E234 each coordinate 1D-myo-inositol 2-(L-cysteinylamino)-2-deoxy-alpha-D-glucopyranoside. Residues 238–240 (LGV) and 245–251 (QRRGLGQ) each bind acetyl-CoA. Y282 contacts 1D-myo-inositol 2-(L-cysteinylamino)-2-deoxy-alpha-D-glucopyranoside. 287–292 (NVAAVR) is an acetyl-CoA binding site.

Belongs to the acetyltransferase family. MshD subfamily. In terms of assembly, monomer.

It catalyses the reaction 1D-myo-inositol 2-(L-cysteinylamino)-2-deoxy-alpha-D-glucopyranoside + acetyl-CoA = mycothiol + CoA + H(+). In terms of biological role, catalyzes the transfer of acetyl from acetyl-CoA to desacetylmycothiol (Cys-GlcN-Ins) to form mycothiol. This is Mycothiol acetyltransferase from Mycobacterium bovis (strain ATCC BAA-935 / AF2122/97).